A 180-amino-acid chain; its full sequence is MNLLLLAMGLILPRRPHALHMGPGDPNFDEKLVKGKWFSVALASNEPKFIAKDTDMKFFIHKIQVTPESLQFHFHRKVRGMCVPTMMTAHKTKKKFQYTVNHSGHKTIFLEKVDPKHFVIFCAHSMKHGKETVVVTLFSRTPTVSPDVMWMFKKYCKTHGIHTSNIVDLTQTDRCLHARH.

Residues 1–18 (MNLLLLAMGLILPRRPHA) form the signal peptide. An intrachain disulfide couples Cys82 to Cys175. Residue Asn101 is glycosylated (N-linked (GlcNAc...) asparagine).

Belongs to the calycin superfamily. Lipocalin family. As to expression, expressed in glandular and lumenal epithelia of the endometrium. Is transferred to the embryonic capsule, the conceptus and the yolk sac.

Its subcellular location is the secreted. Its function is as follows. Binds fatty acids and retinol. Is specialized for the preattachment embryo. May be important to maintain the pregnancy and may transport small hydrophobic ligands from mother to the developing embryo. The chain is Uterocalin from Equus caballus (Horse).